The following is a 354-amino-acid chain: Phosphatidylserine decarboxylase proenzyme (354 aa).

Residues 18–36 (YLITGVTILSFILMFQYKY) form a helical membrane-spanning segment. Catalysis depends on charge relay system; for autoendoproteolytic cleavage activity residues D139, H198, and S308. S308 functions as the Schiff-base intermediate with substrate; via pyruvic acid; for decarboxylase activity in the catalytic mechanism. S308 carries the pyruvic acid (Ser); by autocatalysis modification.

This sequence belongs to the phosphatidylserine decarboxylase family. PSD-B subfamily. Eukaryotic type I sub-subfamily. In terms of assembly, heterodimer of a large membrane-associated beta subunit and a small pyruvoyl-containing alpha subunit. Pyruvate is required as a cofactor. Is synthesized initially as an inactive proenzyme. Formation of the active enzyme involves a self-maturation process in which the active site pyruvoyl group is generated from an internal serine residue via an autocatalytic post-translational modification. Two non-identical subunits are generated from the proenzyme in this reaction, and the pyruvate is formed at the N-terminus of the alpha chain, which is derived from the carboxyl end of the proenzyme. The autoendoproteolytic cleavage occurs by a canonical serine protease mechanism, in which the side chain hydroxyl group of the serine supplies its oxygen atom to form the C-terminus of the beta chain, while the remainder of the serine residue undergoes an oxidative deamination to produce ammonia and the pyruvoyl prosthetic group on the alpha chain. During this reaction, the Ser that is part of the protease active site of the proenzyme becomes the pyruvoyl prosthetic group, which constitutes an essential element of the active site of the mature decarboxylase.

It is found in the membrane. It localises to the endoplasmic reticulum membrane. It carries out the reaction a 1,2-diacyl-sn-glycero-3-phospho-L-serine + H(+) = a 1,2-diacyl-sn-glycero-3-phosphoethanolamine + CO2. The protein operates within phospholipid metabolism; phosphatidylethanolamine biosynthesis; phosphatidylethanolamine from CDP-diacylglycerol: step 2/2. With respect to regulation, protease activity is inhibited by PMSF. In terms of biological role, catalyzes the formation of phosphatidylethanolamine (PtdEtn) from phosphatidylserine (PtdSer). Plays a central role in phospholipid metabolism and in the interorganelle trafficking of phosphatidylserine. The polypeptide is Phosphatidylserine decarboxylase proenzyme (Plasmodium knowlesi (strain H)).